We begin with the raw amino-acid sequence, 670 residues long: Glycine--tRNA ligase beta subunit (670 aa).

This sequence belongs to the class-II aminoacyl-tRNA synthetase family. As to quaternary structure, tetramer of two alpha and two beta subunits.

The protein resides in the cytoplasm. The enzyme catalyses tRNA(Gly) + glycine + ATP = glycyl-tRNA(Gly) + AMP + diphosphate. This is Glycine--tRNA ligase beta subunit from Thermotoga neapolitana (strain ATCC 49049 / DSM 4359 / NBRC 107923 / NS-E).